The sequence spans 187 residues: Elongation factor P (187 aa).

Belongs to the elongation factor P family.

The protein localises to the cytoplasm. Its pathway is protein biosynthesis; polypeptide chain elongation. Functionally, involved in peptide bond synthesis. Stimulates efficient translation and peptide-bond synthesis on native or reconstituted 70S ribosomes in vitro. Probably functions indirectly by altering the affinity of the ribosome for aminoacyl-tRNA, thus increasing their reactivity as acceptors for peptidyl transferase. The chain is Elongation factor P from Helicobacter hepaticus (strain ATCC 51449 / 3B1).